The sequence spans 339 residues: Fructose-1,6-bisphosphatase, cytosolic (339 aa).

Mg(2+) is bound by residues glutamate 70, glutamate 99, aspartate 120, leucine 122, and aspartate 123. Substrate is bound by residues 123–126 (DGSS), asparagine 214, tyrosine 246, tyrosine 266, and lysine 276. Glutamate 282 contacts Mg(2+).

It belongs to the FBPase class 1 family. Mg(2+) serves as cofactor.

The protein resides in the cytoplasm. It catalyses the reaction beta-D-fructose 1,6-bisphosphate + H2O = beta-D-fructose 6-phosphate + phosphate. The protein is Fructose-1,6-bisphosphatase, cytosolic of Brassica napus (Rape).